The sequence spans 217 residues: Non-structural protein NS3 (217 aa).

Belongs to the orbivirus NS3 family.

In terms of biological role, may play a role in the release of virions from infected cells. This chain is Non-structural protein NS3 (Segment-10), found in Camelus dromedarius (Dromedary).